Reading from the N-terminus, the 234-residue chain is tRNA1(Val) (adenine(37)-N6)-methyltransferase (234 aa).

Belongs to the methyltransferase superfamily. tRNA (adenine-N(6)-)-methyltransferase family.

It is found in the cytoplasm. The enzyme catalyses adenosine(37) in tRNA1(Val) + S-adenosyl-L-methionine = N(6)-methyladenosine(37) in tRNA1(Val) + S-adenosyl-L-homocysteine + H(+). Its function is as follows. Specifically methylates the adenine in position 37 of tRNA(1)(Val) (anticodon cmo5UAC). The chain is tRNA1(Val) (adenine(37)-N6)-methyltransferase from Phocaeicola vulgatus (strain ATCC 8482 / DSM 1447 / JCM 5826 / CCUG 4940 / NBRC 14291 / NCTC 11154) (Bacteroides vulgatus).